A 341-amino-acid chain; its full sequence is Methionine import ATP-binding protein MetN 2 (341 aa).

Residues Ile2–Val241 enclose the ABC transporter domain. Position 38–45 (Gly38–Ser45) interacts with ATP.

The protein belongs to the ABC transporter superfamily. Methionine importer (TC 3.A.1.24) family. The complex is composed of two ATP-binding proteins (MetN), two transmembrane proteins (MetI) and a solute-binding protein (MetQ).

Its subcellular location is the cell membrane. The catalysed reaction is L-methionine(out) + ATP + H2O = L-methionine(in) + ADP + phosphate + H(+). The enzyme catalyses D-methionine(out) + ATP + H2O = D-methionine(in) + ADP + phosphate + H(+). In terms of biological role, part of the ABC transporter complex MetNIQ involved in methionine import. Responsible for energy coupling to the transport system. This is Methionine import ATP-binding protein MetN 2 from Bacillus licheniformis (strain ATCC 14580 / DSM 13 / JCM 2505 / CCUG 7422 / NBRC 12200 / NCIMB 9375 / NCTC 10341 / NRRL NRS-1264 / Gibson 46).